Consider the following 1214-residue polypeptide: MHSKELQTISAAVARKAVPNTMVIRLKRDEEDGEMTLEERQAQCKAIEYSNSVFGMIADVANDIGSIPVIGEVVGIVTAPIAIVSHITSAGLDIASTALDCDDIPFDEIKEILEERFNEIDRKLDKNTAALEEVSKLVSKTFVTVEKTRNEMNENFKLVLETIESKEIKSIVFKINDFKKFFEKERQRIKGLPKDRYVAKLLEQKGILGSLKEVREPSGNSLSSALNELLDKNNNYAIPKVVDDNKAFQALYALFYGTQTYAAVMFFLLEQHSYLADYYYQKGDDVNFNAEFNNVAIIFDDFKSSLTGGDDGLIDNVIEVLNTVKALPFIKNADSKLYRELVTRTKALETLKNQIKTTDLPLIDDIPETLSQVNFPNDENQLPTPIGNWVDGVEVRYAVQYESKGMYSKFSEWSEPFTVQGNACPTIKVRVDPKKRNRLIFRKFNSGKPQFAGTMTHSQTNFKDIHRDLYDAALNINKLKAVDEATTLIEKGADIEAKFDNDRSAMHAVAYRGNNKIALRFLLKNQSIDIELKDKNGFTPLHIAAEAGQAGFVKLLINHGADVNAKTSKTNLTPLHLATRSGFSKTVRNLLESPNIKVNEKEDDGFTPLHTAVMSTYMVVDALLNHPDIDKNAQSTSGLTPFHLAIINESQEVAESLVESNADLNIQDVNHMAPIHFAASMGSIKMLRYLISIKDKVSINSVTENNNWTPLHFAIYFKKEDAAKELLKQDDINLTIVADGNLTVLHLAVSTGQINIIKELLKRGSNIEEKTGEGYTSLHIAAMRKEPEIAVVLIENGADIEARSADNLTPLHSAAKIGRKSTVLYLLEKGADIGAKTADGSTALHLAVSGRKMKTVETLLNKGANLKEYDNNKYLPIHKAIINDDLDMVRLFLEKDPSLKDDETEEGRTSIMLIVQKLLLELYNYFINNYAETLDEEALFNRLDEQGKLELAYIFHNKEGDAKEAVKPTILVTIKLMEYCLKKLREESGAPEGSFDSPSSKQCISTFSEDEMFRRTLPEIVKETNSRYLPLKGFSRSLNKFLPSLKFAESKNSYRSENFVSNIDSNGALLLLDVFIRKFTNEKYNLTGKEAVPYLEAKASSLRIASKFEELLTEVKGIPAGELINMAEVSSNIHKAIASGKPVSKVLCSYLDTFSELNSQQMEELVNTYLSTKPSVITSASADYQKLPNLLTATCLEPERMAQLIDVHQKMFLR.

The segment at 64-89 is helix H2 is the probable transmembrane region of the tetrameric pore inserted in the target cell membrane; the sequence is IGSIPVIGEVVGIVTAPIAIVSHITS. The segment at 250 to 269 is helix H8 is the probable transmembrane region of the tetrameric pore inserted in the target cell membrane; sequence ALYALFYGTQTYAAVMFFLL. ANK repeat units lie at residues 464–497, 501–532, 536–565, 570–600, 604–633, 637–666, 670–699, 706–734, 740–769, 773–802, 806–835, 839–868, 872–901, 906–936, and 966–994; these read DIHRDLYDAALNINKLKAVDEATTLIEKGADIEA, NDRSAMHAVAYRGNNKIALRFLLKNQSIDIEL, NGFTPLHIAAEAGQAGFVKLLINHGADVNA, TNLTPLHLATRSGFSKTVRNLLESPNIKVNE, DGFTPLHTAVMSTYMVVDALLNHPDIDKNA, SGLTPFHLAIINESQEVAESLVESNADLNI, NHMAPIHFAASMGSIKMLRYLISIKDKVSI, NNWTPLHFAIYFKKEDAAKELLKQDDINL, GNLTVLHLAVSTGQINIIKELLKRGSNIEE, EGYTSLHIAAMRKEPEIAVVLIENGADIEA, DNLTPLHSAAKIGRKSTVLYLLEKGADIGA, DGSTALHLAVSGRKMKTVETLLNKGANLKE, NKYLPIHKAIINDDLDMVRLFLEKDPSLKD, EGRTSIMLIVQKLLLELYNYFINNYAETLDE, and VKPTILVTIKLMEYCLKKLREESGAPEGS. The propeptide at 1020–1214 is C-terminal domain cleavage is required for toxin activation; that stretch reads IVKETNSRYL…IDVHQKMFLR (195 aa).

This sequence belongs to the cationic peptide 01 (latrotoxin) family. 04 (delta-latroinsectotoxin) subfamily. Homotetramer in membrane. Expressed by the venom gland.

It is found in the secreted. It localises to the target cell membrane. In terms of biological role, insecticidal presynaptic neurotoxin that induces massive neurotransmitter release at insect (but not vertebrate) neuromuscular junctions. Native toxin forms cation-permeable pores (with high permeability to calcium) in lipid membranes locust muscle membrane and artificial lipid bilayers. May bind to insect neurexin-1 homolog, insect adhesion G protein-coupled receptor L1 homolog, and insect receptor-type tyrosine-protein phosphatase S homolog, and induces neurotransmitter exocytosis both by forming tetrameric pores in membranes and signaling via G protein-coupled receptor. Oligomerization is a process independent of divalent cations. The protein is Delta-latroinsectotoxin-Lt1a of Latrodectus tredecimguttatus (Mediterranean black widow spider).